Reading from the N-terminus, the 440-residue chain is Metacaspase-1 (440 aa).

The tract at residues 1 to 134 (MFPGSGRKTY…NPQGFGQNSG (134 aa)) is disordered. Residues 14–51 (APPPGPPNGYQYGPPPGAQGQYPPPQGYPPQGYPPQGY) show a composition bias toward pro residues. Residues 52 to 81 (PPQGYAPQGYPPQGYAPQGYAPQGYQQQGG) show a composition bias toward low complexity. Residues 82 to 94 (QQQGGQQQGGQQQ) show a composition bias toward gly residues. Residues 98-110 (RQTYATQEAQNFG) are compositionally biased toward polar residues. Catalysis depends on residues H230 and C286.

Belongs to the peptidase C14B family.

Its function is as follows. Involved in cell death (apoptosis). This is Metacaspase-1 (MCA1) from Debaryomyces hansenii (strain ATCC 36239 / CBS 767 / BCRC 21394 / JCM 1990 / NBRC 0083 / IGC 2968) (Yeast).